A 579-amino-acid chain; its full sequence is V-type ATP synthase alpha chain (579 aa).

An ATP-binding site is contributed by 227–234 (GGFGTGKT).

Belongs to the ATPase alpha/beta chains family.

It catalyses the reaction ATP + H2O + 4 H(+)(in) = ADP + phosphate + 5 H(+)(out). Produces ATP from ADP in the presence of a proton gradient across the membrane. The V-type alpha chain is a catalytic subunit. The sequence is that of V-type ATP synthase alpha chain from Anaeromyxobacter dehalogenans (strain 2CP-C).